Here is a 211-residue protein sequence, read N- to C-terminus: ATP-dependent dethiobiotin synthetase BioD (211 aa).

Residue 10–15 (GIGKTY) coordinates ATP. Mg(2+) is bound at residue T14. Residue K35 is part of the active site. S39 contributes to the substrate binding site. ATP is bound by residues D44, 105 to 108 (EGAG), and 165 to 166 (NC). 2 residues coordinate Mg(2+): D44 and E105.

The protein belongs to the dethiobiotin synthetase family. Homodimer. It depends on Mg(2+) as a cofactor.

The protein localises to the cytoplasm. The catalysed reaction is (7R,8S)-7,8-diammoniononanoate + CO2 + ATP = (4R,5S)-dethiobiotin + ADP + phosphate + 3 H(+). Its pathway is cofactor biosynthesis; biotin biosynthesis; biotin from 7,8-diaminononanoate: step 1/2. Functionally, catalyzes a mechanistically unusual reaction, the ATP-dependent insertion of CO2 between the N7 and N8 nitrogen atoms of 7,8-diaminopelargonic acid (DAPA, also called 7,8-diammoniononanoate) to form a ureido ring. This chain is ATP-dependent dethiobiotin synthetase BioD, found in Methanococcus vannielii (strain ATCC 35089 / DSM 1224 / JCM 13029 / OCM 148 / SB).